A 92-amino-acid polypeptide reads, in one-letter code: uncharacterized protein (92 aa).

The disordered stretch occupies residues 1-92; the sequence is MSDAAAPAQA…PSPSQQQVAA (92 aa).

This is an uncharacterized protein from Caenorhabditis elegans.